A 620-amino-acid chain; its full sequence is Proline--tRNA ligase (620 aa).

It belongs to the class-II aminoacyl-tRNA synthetase family. ProS type 1 subfamily. As to quaternary structure, homodimer.

It localises to the cytoplasm. The catalysed reaction is tRNA(Pro) + L-proline + ATP = L-prolyl-tRNA(Pro) + AMP + diphosphate. In terms of biological role, catalyzes the attachment of proline to tRNA(Pro) in a two-step reaction: proline is first activated by ATP to form Pro-AMP and then transferred to the acceptor end of tRNA(Pro). As ProRS can inadvertently accommodate and process non-cognate amino acids such as alanine and cysteine, to avoid such errors it has two additional distinct editing activities against alanine. One activity is designated as 'pretransfer' editing and involves the tRNA(Pro)-independent hydrolysis of activated Ala-AMP. The other activity is designated 'posttransfer' editing and involves deacylation of mischarged Ala-tRNA(Pro). The misacylated Cys-tRNA(Pro) is not edited by ProRS. The chain is Proline--tRNA ligase from Streptococcus suis (strain 98HAH33).